The sequence spans 793 residues: E3 UFM1-protein ligase 1 (793 aa).

Residues 2–212 (AADWEEIRRL…INNLLNLYGF (211 aa)) are required for E3 UFM1-protein ligase activity. Disordered regions lie at residues 405 to 472 (ALLE…RNKL) and 745 to 793 (GAEK…SVTE). The segment covering 427 to 439 (EGGGSVKSGGGGN) has biased composition (gly residues). Residues 767–781 (SLQRELHSLSRDIKD) show a composition bias toward basic and acidic residues.

It belongs to the UFL1 family. As to quaternary structure, catalytic component of the UFM1 ribosome E3 ligase (UREL) complex. Interacts with E2-like enzyme UFC1.

Its subcellular location is the endoplasmic reticulum membrane. The protein resides in the cytoplasm. It is found in the cytosol. The protein localises to the nucleus. It localises to the chromosome. E3 protein ligase that mediates ufmylation, the covalent attachment of the ubiquitin-like modifier UFM1 to lysine residues on target proteins, and which plays a key role in various processes, such as ribosome recycling, response to DNA damage, interferon response or reticulophagy (also called ER-phagy). As part of the UREL complex, plays a key role in ribosome recycling by catalyzing mono-ufmylation of RPL26/uL24 subunit of the 60S ribosome. Ufmylation of RPL26/uL24 occurs on free 60S ribosomes following ribosome dissociation: it weakens the junction between post-termination 60S subunits and SEC61 translocons, promoting release and recycling of the large ribosomal subunit from the endoplasmic reticulum membrane. Ufmylation of RPL26/uL24 and subsequent 60S ribosome recycling either take place after normal termination of translation or after ribosome stalling during cotranslational translocation at the endoplasmic reticulum. Involved in reticulophagy in response to endoplasmic reticulum stress by mediating ufmylation of proteins such as CYB5R3 and RPN1, thereby promoting lysosomal degradation of ufmylated proteins. Ufmylation in response to endoplasmic reticulum stress is essential for processes such as hematopoiesis, blood vessel morphogenesis or inflammatory response. This chain is E3 UFM1-protein ligase 1, found in Danio rerio (Zebrafish).